The chain runs to 366 residues: Phospho-N-acetylmuramoyl-pentapeptide-transferase (366 aa).

The next 10 helical transmembrane spans lie at 25 to 45 (AGAA…AIIN), 70 to 90 (GTPT…SLLW), 93 to 113 (LSNV…AIGF), 134 to 154 (LGIE…MALA), 174 to 194 (FVIN…VGAG), 205 to 225 (GLAI…AYLA), 245 to 265 (LAVI…FNAP), 268 to 288 (AIFM…SIAV), 297 to 317 (VIVG…VFWF), and 343 to 363 (QVVI…LATL).

Belongs to the glycosyltransferase 4 family. MraY subfamily. It depends on Mg(2+) as a cofactor.

The protein localises to the cell inner membrane. It carries out the reaction UDP-N-acetyl-alpha-D-muramoyl-L-alanyl-gamma-D-glutamyl-meso-2,6-diaminopimeloyl-D-alanyl-D-alanine + di-trans,octa-cis-undecaprenyl phosphate = di-trans,octa-cis-undecaprenyl diphospho-N-acetyl-alpha-D-muramoyl-L-alanyl-D-glutamyl-meso-2,6-diaminopimeloyl-D-alanyl-D-alanine + UMP. Its pathway is cell wall biogenesis; peptidoglycan biosynthesis. In terms of biological role, catalyzes the initial step of the lipid cycle reactions in the biosynthesis of the cell wall peptidoglycan: transfers peptidoglycan precursor phospho-MurNAc-pentapeptide from UDP-MurNAc-pentapeptide onto the lipid carrier undecaprenyl phosphate, yielding undecaprenyl-pyrophosphoryl-MurNAc-pentapeptide, known as lipid I. This chain is Phospho-N-acetylmuramoyl-pentapeptide-transferase, found in Agrobacterium fabrum (strain C58 / ATCC 33970) (Agrobacterium tumefaciens (strain C58)).